Here is a 327-residue protein sequence, read N- to C-terminus: Biotin synthase (327 aa).

Positions 42–268 (NKVQKASLLS…VMPASTVRLS (227 aa)) constitute a Radical SAM core domain. Residues C57, C61, and C64 each coordinate [4Fe-4S] cluster. 4 residues coordinate [2Fe-2S] cluster: C102, C134, C194, and R266.

Belongs to the radical SAM superfamily. Biotin synthase family. Homodimer. [4Fe-4S] cluster is required as a cofactor. The cofactor is [2Fe-2S] cluster.

It carries out the reaction (4R,5S)-dethiobiotin + (sulfur carrier)-SH + 2 reduced [2Fe-2S]-[ferredoxin] + 2 S-adenosyl-L-methionine = (sulfur carrier)-H + biotin + 2 5'-deoxyadenosine + 2 L-methionine + 2 oxidized [2Fe-2S]-[ferredoxin]. It functions in the pathway cofactor biosynthesis; biotin biosynthesis; biotin from 7,8-diaminononanoate: step 2/2. Catalyzes the conversion of dethiobiotin (DTB) to biotin by the insertion of a sulfur atom into dethiobiotin via a radical-based mechanism. This chain is Biotin synthase, found in Rhizobium rhizogenes (strain K84 / ATCC BAA-868) (Agrobacterium radiobacter).